We begin with the raw amino-acid sequence, 457 residues long: Aromatic amino acid transport protein AroP (457 aa).

The Cytoplasmic portion of the chain corresponds to 1-19; it reads MMEGQQHGEQLKRGLKNRH. The chain crosses the membrane as a helical span at residues 20–40; that stretch reads IQLIALGGAIGTGLFLGSASV. Residues 41 to 42 are Periplasmic-facing; sequence IQ. Residues 43 to 63 form a helical membrane-spanning segment; the sequence is SAGPGIILGYAIAGFIAFLIM. Over 64–86 the chain is Cytoplasmic; sequence RQLGEMVVEEPVAGSFSHFAYKY. The chain crosses the membrane as a helical span at residues 87–107; that stretch reads WGSFAGFASGWNYWVLYVLVA. Over 108–117 the chain is Periplasmic; sequence MAELTAVGKY. Residues 118–138 form a helical membrane-spanning segment; it reads IQFWYPEIPTWVSAAVFFVVI. Residues 139–155 lie on the Cytoplasmic side of the membrane; it reads NAINLTNVTVFGEMEFW. Residues 156–176 form a helical membrane-spanning segment; that stretch reads FAIIKVIAVVAMIIFGGWLLF. Over 177–201 the chain is Periplasmic; it reads SGNGGPQASVSNLWDQGGFLPHGFT. The helical transmembrane segment at 202-222 threads the bilayer; the sequence is GLVMMMAIIMFSFGGLELVGI. Residues 223 to 240 are Cytoplasmic-facing; that stretch reads TAAEADNPEQSIPKATNQ. The chain crosses the membrane as a helical span at residues 241-261; it reads VIYRILIFYIGSLAVLLSLMP. At 262–271 the chain is on the periplasmic side; the sequence is WTRVTADTSP. Residues 272–292 form a helical membrane-spanning segment; the sequence is FVLIFHELGDTFVANALNIVV. The Cytoplasmic segment spans residues 293–333; sequence LTAALSVYNSCVYCNSRMLFGLAQQGNAPKALASVDKRGVP. The chain crosses the membrane as a helical span at residues 334-354; the sequence is VNTILVSALVTALCVLINYLA. Topologically, residues 355–358 are periplasmic; the sequence is PESA. A helical membrane pass occupies residues 359–379; that stretch reads FGLLMALVVSALVINWAMISL. Residues 380-407 lie on the Cytoplasmic side of the membrane; the sequence is AHMKFRRAKQEQGVVTRFPALLYPLGNW. The helical transmembrane segment at 408–428 threads the bilayer; sequence ICLLFMAVVLVIMLMTPGMAI. A topological domain (periplasmic) is located at residue serine 429. Residues 430-450 form a helical membrane-spanning segment; the sequence is VYLIPVWLVVLGIGYLFKEKT. Over 451-457 the chain is Cytoplasmic; the sequence is AKAVKAH.

This sequence belongs to the amino acid-polyamine-organocation (APC) superfamily. Amino acid transporter (AAT) (TC 2.A.3.1) family.

The protein localises to the cell inner membrane. It catalyses the reaction L-phenylalanine(in) + H(+)(in) = L-phenylalanine(out) + H(+)(out). The catalysed reaction is L-tryptophan(in) + H(+)(in) = L-tryptophan(out) + H(+)(out). The enzyme catalyses L-tyrosine(in) + H(+)(in) = L-tyrosine(out) + H(+)(out). In terms of biological role, permease that is involved in the active transport across the cytoplasmic membrane of all three aromatic amino acids, phenylalanine, tyrosine and tryptophan. This is Aromatic amino acid transport protein AroP (aroP) from Escherichia coli O157:H7.